The sequence spans 776 residues: Protein SEY1 (776 aa).

Residues methionine 1–histidine 681 lie on the Cytoplasmic side of the membrane. Residues glycine 34–tyrosine 263 enclose the GB1/RHD3-type G domain. Glycine 44–serine 51 contacts GTP. A helical membrane pass occupies residues isoleucine 682 to isoleucine 702. The Lumenal segment spans residues arginine 703–proline 705. A helical transmembrane segment spans residues leucine 706–leucine 726. The Cytoplasmic portion of the chain corresponds to tryptophan 727–lysine 776.

The protein belongs to the TRAFAC class dynamin-like GTPase superfamily. GB1/RHD3 GTPase family. RHD3 subfamily. As to quaternary structure, interacts with RTN1 and YOP1; GTP binding is not required for these interactions.

The protein resides in the endoplasmic reticulum membrane. Cooperates with the reticulon proteins RTN1 and RTN2 and the tubule-shaping DP1 family protein YOP1 to generate and maintain the structure of the tubular endoplasmic reticulum network. Has GTPase activity, which is required for its function in ER organization. This is Protein SEY1 from Saccharomyces cerevisiae (strain RM11-1a) (Baker's yeast).